We begin with the raw amino-acid sequence, 97 residues long: Large ribosomal subunit protein uL23 (97 aa).

The protein belongs to the universal ribosomal protein uL23 family. As to quaternary structure, part of the 50S ribosomal subunit. Contacts protein L29, and trigger factor when it is bound to the ribosome.

In terms of biological role, one of the early assembly proteins it binds 23S rRNA. One of the proteins that surrounds the polypeptide exit tunnel on the outside of the ribosome. Forms the main docking site for trigger factor binding to the ribosome. This is Large ribosomal subunit protein uL23 from Anaeromyxobacter dehalogenans (strain 2CP-1 / ATCC BAA-258).